The following is a 207-amino-acid chain: GTP cyclohydrolase-2 (207 aa).

49–53 (RTHSE) provides a ligand contact to GTP. Zn(2+) is bound by residues cysteine 54, cysteine 65, and cysteine 67. GTP is bound by residues glutamine 70, 92–94 (EGR), and threonine 114. Aspartate 126 (proton acceptor) is an active-site residue. Arginine 128 serves as the catalytic Nucleophile. Threonine 149 and lysine 154 together coordinate GTP.

This sequence belongs to the GTP cyclohydrolase II family. Zn(2+) is required as a cofactor.

The enzyme catalyses GTP + 4 H2O = 2,5-diamino-6-hydroxy-4-(5-phosphoribosylamino)-pyrimidine + formate + 2 phosphate + 3 H(+). It functions in the pathway cofactor biosynthesis; riboflavin biosynthesis; 5-amino-6-(D-ribitylamino)uracil from GTP: step 1/4. Functionally, catalyzes the conversion of GTP to 2,5-diamino-6-ribosylamino-4(3H)-pyrimidinone 5'-phosphate (DARP), formate and pyrophosphate. The chain is GTP cyclohydrolase-2 from Hahella chejuensis (strain KCTC 2396).